The sequence spans 259 residues: Hydroxyacylglutathione hydrolase (259 aa).

Zn(2+) contacts are provided by H56, H58, D60, H61, H112, D133, and H171.

This sequence belongs to the metallo-beta-lactamase superfamily. Glyoxalase II family. In terms of assembly, monomer. Zn(2+) serves as cofactor.

It carries out the reaction an S-(2-hydroxyacyl)glutathione + H2O = a 2-hydroxy carboxylate + glutathione + H(+). Its pathway is secondary metabolite metabolism; methylglyoxal degradation; (R)-lactate from methylglyoxal: step 2/2. In terms of biological role, thiolesterase that catalyzes the hydrolysis of S-D-lactoyl-glutathione to form glutathione and D-lactic acid. This chain is Hydroxyacylglutathione hydrolase, found in Pseudomonas putida (strain ATCC 47054 / DSM 6125 / CFBP 8728 / NCIMB 11950 / KT2440).